We begin with the raw amino-acid sequence, 389 residues long: Stilbene synthase 1 (389 aa).

55–58 (KFQR) contacts substrate. The active site involves Cys164. Substrate-binding positions include Leu267 and 305–307 (GGR).

Belongs to the thiolase-like superfamily. Chalcone/stilbene synthases family. As to quaternary structure, homodimer.

It localises to the cytoplasm. It carries out the reaction 4-coumaroyl-CoA + 3 malonyl-CoA + 3 H(+) = trans-resveratrol + 4 CO2 + 4 CoA. The protein operates within phytoalexin biosynthesis; 3,4',5-trihydroxystilbene biosynthesis; 3,4',5-trihydroxystilbene from trans-4-coumarate: step 2/2. The sequence is that of Stilbene synthase 1 from Arachis hypogaea (Peanut).